A 433-amino-acid chain; its full sequence is L-saccharopine oxidase (433 aa).

The signal sequence occupies residues 1–18; it reads MSRTIVIVGCGVFGLSTA. Residues Asn-24, Asn-119, Asn-188, and Asn-229 are each glycosylated (N-linked (GlcNAc...) asparagine).

This sequence belongs to the MSOX/MTOX family. In terms of assembly, monomer. FAD is required as a cofactor.

The protein localises to the secreted. The protein resides in the cytoplasm. It is found in the nucleus. It carries out the reaction L-saccharopine + O2 + H2O = (S)-2-amino-6-oxohexanoate + L-glutamate + H2O2. This Schizosaccharomyces pombe (strain 972 / ATCC 24843) (Fission yeast) protein is L-saccharopine oxidase.